A 1175-amino-acid chain; its full sequence is Pyruvate carboxylase 1 (1175 aa).

The Biotin carboxylation domain occupies 31-481 (EFNKVMVANR…DTYFIDEHPE (451 aa)). Residues lysine 147, glutamate 231, and histidine 266 each contribute to the ATP site. One can recognise an ATP-grasp domain in the interval 151–348 (RQAAIEAGVQ…LVQAQIRIAE (198 aa)). Residue arginine 323 is part of the active site. The 270-residue stretch at 559–828 (CMITDTTFRD…DTGLSLDDIS (270 aa)) folds into the Pyruvate carboxyltransferase domain. Residues 567–571 (RDAHQ) and arginine 640 contribute to the substrate site. Residue aspartate 568 participates in a divalent metal cation binding. The a divalent metal cation site is built by lysine 737, histidine 767, and histidine 769. Residue lysine 737 is modified to N6-carboxylysine. Substrate is bound at residue threonine 904. The Biotinyl-binding domain occupies 1099-1174 (RALPGVRGHI…SAGDLVVEVE (76 aa)). Position 1140 is an N6-biotinyllysine (lysine 1140).

In terms of assembly, interacts with sir-2.2 and sir-2.3. The cofactor is biotin. It depends on Zn(2+) as a cofactor.

The protein localises to the cytoplasm. The catalysed reaction is hydrogencarbonate + pyruvate + ATP = oxaloacetate + ADP + phosphate + H(+). The protein operates within carbohydrate biosynthesis; gluconeogenesis. Pyruvate carboxylase catalyzes a 2-step reaction, involving the ATP-dependent carboxylation of the covalently attached biotin in the first step and the transfer of the carboxyl group to pyruvate in the second. The sequence is that of Pyruvate carboxylase 1 from Caenorhabditis elegans.